The chain runs to 177 residues: R-phycoerythrin beta chain (177 aa).

Residues Asn-35 and Asp-39 each coordinate (2R,3E)-phycoerythrobilin. The phycourobilin site is built by Cys-50, Asp-54, and Cys-61. Residues Asn-72, 77–78, Cys-82, and 84–85 contribute to the (2R,3E)-phycoerythrobilin site; these read RR and RD. Position 72 is an N4-methylasparagine (Asn-72). Residue 147 to 148 coordinates phycourobilin; sequence SQ. Residues Ile-154 and Cys-158 each coordinate (2R,3E)-phycoerythrobilin.

It belongs to the phycobiliprotein family. Heterododecamer of 6 alpha and 6 beta chains. The basic functional unit of phycobiliproteins is a ring-shaped hexamer formed from two back-to-back trimers contacting via the alpha chain subunits. The trimers are composed of alpha/beta subunit heterodimers arranged around a three-fold axis of symmetry. The phycoerythrins also contain a gamma subunit which is located in the center of the hexamer. Contains two covalently linked phycoerythrobilin chromophores and one covalently linked phycourobilin chromophore.

The protein resides in the plastid. The protein localises to the chloroplast thylakoid membrane. In terms of biological role, light-harvesting photosynthetic tetrapyrrole chromophore-protein from the phycobiliprotein complex. This Agarophyton chilense (Red seaweed) protein is R-phycoerythrin beta chain (rpeB).